The primary structure comprises 316 residues: Biotin synthase (316 aa).

The Radical SAM core domain occupies 36–264 (TEIQISTLLS…ASRVRLAAGR (229 aa)). Positions 51, 55, and 58 each coordinate [4Fe-4S] cluster. Residues Cys96, Cys127, Cys187, and Arg259 each coordinate [2Fe-2S] cluster.

It belongs to the radical SAM superfamily. Biotin synthase family. As to quaternary structure, homodimer. [4Fe-4S] cluster serves as cofactor. It depends on [2Fe-2S] cluster as a cofactor.

It catalyses the reaction (4R,5S)-dethiobiotin + (sulfur carrier)-SH + 2 reduced [2Fe-2S]-[ferredoxin] + 2 S-adenosyl-L-methionine = (sulfur carrier)-H + biotin + 2 5'-deoxyadenosine + 2 L-methionine + 2 oxidized [2Fe-2S]-[ferredoxin]. The protein operates within cofactor biosynthesis; biotin biosynthesis; biotin from 7,8-diaminononanoate: step 2/2. Catalyzes the conversion of dethiobiotin (DTB) to biotin by the insertion of a sulfur atom into dethiobiotin via a radical-based mechanism. This is Biotin synthase from Gluconacetobacter diazotrophicus (strain ATCC 49037 / DSM 5601 / CCUG 37298 / CIP 103539 / LMG 7603 / PAl5).